The sequence spans 166 residues: 2-C-methyl-D-erythritol 2,4-cyclodiphosphate synthase (166 aa).

A divalent metal cation contacts are provided by D15 and H17. Residues D15–H17 and H43–S44 each bind 4-CDP-2-C-methyl-D-erythritol 2-phosphate. H51 lines the a divalent metal cation pocket. Residues D65 to G67, T141 to E144, and R151 each bind 4-CDP-2-C-methyl-D-erythritol 2-phosphate.

Belongs to the IspF family. As to quaternary structure, homotrimer. A divalent metal cation is required as a cofactor.

The catalysed reaction is 4-CDP-2-C-methyl-D-erythritol 2-phosphate = 2-C-methyl-D-erythritol 2,4-cyclic diphosphate + CMP. The protein operates within isoprenoid biosynthesis; isopentenyl diphosphate biosynthesis via DXP pathway; isopentenyl diphosphate from 1-deoxy-D-xylulose 5-phosphate: step 4/6. Functionally, involved in the biosynthesis of isopentenyl diphosphate (IPP) and dimethylallyl diphosphate (DMAPP), two major building blocks of isoprenoid compounds. Catalyzes the conversion of 4-diphosphocytidyl-2-C-methyl-D-erythritol 2-phosphate (CDP-ME2P) to 2-C-methyl-D-erythritol 2,4-cyclodiphosphate (ME-CPP) with a corresponding release of cytidine 5-monophosphate (CMP). The sequence is that of 2-C-methyl-D-erythritol 2,4-cyclodiphosphate synthase from Synechococcus sp. (strain CC9311).